The following is a 490-amino-acid chain: Ribulose bisphosphate carboxylase large chain (490 aa).

Residues Asn-127 and Thr-177 each coordinate substrate. Lys-179 serves as the catalytic Proton acceptor. Lys-181 contacts substrate. Mg(2+)-binding residues include Lys-205, Asp-207, and Glu-208. N6-carboxylysine is present on Lys-205. Catalysis depends on His-297, which acts as the Proton acceptor. Substrate is bound by residues Arg-298, His-330, and Ser-382.

Belongs to the RuBisCO large chain family. Type I subfamily. As to quaternary structure, heterohexadecamer of 8 large chains and 8 small chains. Mg(2+) is required as a cofactor.

Its subcellular location is the plastid. It localises to the chloroplast. The catalysed reaction is 2 (2R)-3-phosphoglycerate + 2 H(+) = D-ribulose 1,5-bisphosphate + CO2 + H2O. It carries out the reaction D-ribulose 1,5-bisphosphate + O2 = 2-phosphoglycolate + (2R)-3-phosphoglycerate + 2 H(+). In terms of biological role, ruBisCO catalyzes two reactions: the carboxylation of D-ribulose 1,5-bisphosphate, the primary event in carbon dioxide fixation, as well as the oxidative fragmentation of the pentose substrate in the photorespiration process. Both reactions occur simultaneously and in competition at the same active site. The polypeptide is Ribulose bisphosphate carboxylase large chain (Thalassiosira pseudonana (Marine diatom)).